Here is a 76-residue protein sequence, read N- to C-terminus: Large ribosomal subunit protein bL31 (76 aa).

The protein belongs to the bacterial ribosomal protein bL31 family. Type A subfamily. As to quaternary structure, part of the 50S ribosomal subunit.

Binds the 23S rRNA. This chain is Large ribosomal subunit protein bL31, found in Gluconacetobacter diazotrophicus (strain ATCC 49037 / DSM 5601 / CCUG 37298 / CIP 103539 / LMG 7603 / PAl5).